Reading from the N-terminus, the 238-residue chain is Probable transcriptional regulatory protein YeeN (238 aa).

It belongs to the TACO1 family. YeeN subfamily.

Its subcellular location is the cytoplasm. In Shigella sonnei (strain Ss046), this protein is Probable transcriptional regulatory protein YeeN.